Consider the following 716-residue polypeptide: Probable basic-leucine zipper transcription factor O (716 aa).

Residues 20–142 adopt a coiled-coil conformation; it reads LLDDFSQLQQ…YQQRQQQYQD (123 aa). Residues 173–233 are disordered; the sequence is SINYNMNNNN…NNKTTDNINN (61 aa). Residues 381–444 form the bZIP domain; sequence KSTESIKKMN…SVDLMKPSND (64 aa). The segment at 387–403 is basic motif; sequence KKMNQNKASRNYRQKKK. The tract at residues 406–413 is leucine-zipper; it reads IKEIEDKL.

The protein belongs to the bZIP family.

The protein resides in the nucleus. Functionally, probable transcriptional regulator. The polypeptide is Probable basic-leucine zipper transcription factor O (bzpO) (Dictyostelium discoideum (Social amoeba)).